Consider the following 215-residue polypeptide: Pyrrolidone-carboxylate peptidase (215 aa).

Catalysis depends on residues glutamate 80, cysteine 143, and histidine 167.

Belongs to the peptidase C15 family. In terms of assembly, homotetramer.

Its subcellular location is the cytoplasm. The catalysed reaction is Release of an N-terminal pyroglutamyl group from a polypeptide, the second amino acid generally not being Pro.. Removes 5-oxoproline from various penultimate amino acid residues except L-proline. The polypeptide is Pyrrolidone-carboxylate peptidase (Bacillus cereus (strain B4264)).